The primary structure comprises 318 residues: Ribosomal RNA small subunit methyltransferase H (318 aa).

Residues glycine 34–histidine 36, aspartate 57, leucine 91, aspartate 110, and glutamine 117 each bind S-adenosyl-L-methionine.

It belongs to the methyltransferase superfamily. RsmH family.

Its subcellular location is the cytoplasm. The catalysed reaction is cytidine(1402) in 16S rRNA + S-adenosyl-L-methionine = N(4)-methylcytidine(1402) in 16S rRNA + S-adenosyl-L-homocysteine + H(+). Specifically methylates the N4 position of cytidine in position 1402 (C1402) of 16S rRNA. In Chlorobaculum parvum (strain DSM 263 / NCIMB 8327) (Chlorobium vibrioforme subsp. thiosulfatophilum), this protein is Ribosomal RNA small subunit methyltransferase H.